We begin with the raw amino-acid sequence, 352 residues long: ADP-ribosylation factor GTPase-activating protein GCS1 (352 aa).

In terms of domain architecture, Arf-GAP spans 11–127 (RRRLLQLQKI…LTCLCEDRVF (117 aa)). Residues 26 to 49 (CMDCGAPNPQWATPKFGAFICLEC) form a C4-type zinc finger. Over residues 138-151 (SKLSATSQTAASAT) the composition is skewed to low complexity. Disordered regions lie at residues 138 to 181 (SKLS…ANFQ) and 196 to 231 (NQSR…GSSN). The residue at position 151 (Thr-151) is a Phosphothreonine. Ser-157 is subject to Phosphoserine. Thr-161 is modified (phosphothreonine). Ser-168 bears the Phosphoserine mark. Positions 168–179 (SATPANSSNGAN) are enriched in polar residues. Phosphothreonine is present on Thr-170. Ser-260 is modified (phosphoserine). Positions 315 to 330 (NGNAEDSSTAGNTTHT) are enriched in polar residues. Residues 315 to 352 (NGNAEDSSTAGNTTHTEYQKIDNNDKKNEQDEDKWDDF) are disordered. Residues 331 to 343 (EYQKIDNNDKKNE) show a composition bias toward basic and acidic residues.

Its subcellular location is the cytoplasm. It is found in the mitochondrion. The protein localises to the perinuclear region. It localises to the golgi apparatus. In terms of biological role, GTPase-activating protein (GAP) for ARF1 and ARF2. Involved in intracellular vesicular transport. Required for transport from the trans-Golgi network. Implicated in the regulation of retrograde transport from the Golgi to the ER and in actin cytoskeletal organization. May be involved in the maintenance of mitochondrial morphology, possibly through organizing the actin cytoskeleton in Saccharomyces. In Saccharomyces cerevisiae (strain ATCC 204508 / S288c) (Baker's yeast), this protein is ADP-ribosylation factor GTPase-activating protein GCS1 (GCS1).